The sequence spans 249 residues: Ribonuclease PH (249 aa).

Residues R86 and 124 to 126 each bind phosphate; that span reads GTR.

The protein belongs to the RNase PH family. In terms of assembly, homohexameric ring arranged as a trimer of dimers.

The catalysed reaction is tRNA(n+1) + phosphate = tRNA(n) + a ribonucleoside 5'-diphosphate. In terms of biological role, phosphorolytic 3'-5' exoribonuclease that plays an important role in tRNA 3'-end maturation. Removes nucleotide residues following the 3'-CCA terminus of tRNAs; can also add nucleotides to the ends of RNA molecules by using nucleoside diphosphates as substrates, but this may not be physiologically important. Probably plays a role in initiation of 16S rRNA degradation (leading to ribosome degradation) during starvation. This is Ribonuclease PH from Clostridium botulinum (strain Alaska E43 / Type E3).